The following is a 464-amino-acid chain: Soluble pyridine nucleotide transhydrogenase (464 aa).

35-44 (EDKSQVGGNC) contacts FAD.

Belongs to the class-I pyridine nucleotide-disulfide oxidoreductase family. Requires FAD as cofactor.

Its subcellular location is the cytoplasm. It catalyses the reaction NAD(+) + NADPH = NADH + NADP(+). Its function is as follows. Conversion of NADPH, generated by peripheral catabolic pathways, to NADH, which can enter the respiratory chain for energy generation. In Hahella chejuensis (strain KCTC 2396), this protein is Soluble pyridine nucleotide transhydrogenase.